The primary structure comprises 321 residues: Probable pectate lyase A (321 aa).

Positions 1-20 are cleaved as a signal peptide; the sequence is MANFKLFLALAACLSGQALA. N93 carries an N-linked (GlcNAc...) asparagine glycan. Ca(2+)-binding residues include D134, D163, and D167. Residue R220 is part of the active site.

The protein belongs to the polysaccharide lyase 1 family. Requires Ca(2+) as cofactor.

The protein resides in the secreted. It catalyses the reaction Eliminative cleavage of (1-&gt;4)-alpha-D-galacturonan to give oligosaccharides with 4-deoxy-alpha-D-galact-4-enuronosyl groups at their non-reducing ends.. Pectinolytic enzyme consist of four classes of enzymes: pectin lyase, polygalacturonase, pectin methylesterase and rhamnogalacturonase. Among pectinolytic enzymes, pectin lyase is the most important in depolymerization of pectin, since it cleaves internal glycosidic bonds of highly methylated pectins. Favors pectate, the anion, over pectin, the methyl ester. This is Probable pectate lyase A (plyA) from Aspergillus flavus (strain ATCC 200026 / FGSC A1120 / IAM 13836 / NRRL 3357 / JCM 12722 / SRRC 167).